Consider the following 130-residue polypeptide: Small ribosomal subunit protein uS8 (130 aa).

It belongs to the universal ribosomal protein uS8 family. In terms of assembly, part of the 30S ribosomal subunit.

In terms of biological role, one of the primary rRNA binding proteins, it binds directly to 16S rRNA central domain where it helps coordinate assembly of the platform of the 30S subunit. This chain is Small ribosomal subunit protein uS8, found in Methanothermobacter thermautotrophicus (strain ATCC 29096 / DSM 1053 / JCM 10044 / NBRC 100330 / Delta H) (Methanobacterium thermoautotrophicum).